The primary structure comprises 224 residues: Peptidyl-tRNA hydrolase (224 aa).

Residue tyrosine 27 participates in tRNA binding. Histidine 32 (proton acceptor) is an active-site residue. 3 residues coordinate tRNA: tyrosine 78, asparagine 80, and asparagine 126. The span at 203 to 215 (LSGPSSDLDGSNP) shows a compositional bias: low complexity. The interval 203–224 (LSGPSSDLDGSNPAPGHGEASS) is disordered.

It belongs to the PTH family. Monomer.

It localises to the cytoplasm. It catalyses the reaction an N-acyl-L-alpha-aminoacyl-tRNA + H2O = an N-acyl-L-amino acid + a tRNA + H(+). In terms of biological role, hydrolyzes ribosome-free peptidyl-tRNAs (with 1 or more amino acids incorporated), which drop off the ribosome during protein synthesis, or as a result of ribosome stalling. Catalyzes the release of premature peptidyl moieties from peptidyl-tRNA molecules trapped in stalled 50S ribosomal subunits, and thus maintains levels of free tRNAs and 50S ribosomes. This is Peptidyl-tRNA hydrolase from Synechococcus sp. (strain JA-2-3B'a(2-13)) (Cyanobacteria bacterium Yellowstone B-Prime).